Consider the following 252-residue polypeptide: Sulfate transporter CysZ (252 aa).

5 consecutive transmembrane segments (helical) span residues 29–49 (FVLL…FYIF), 66–86 (FLSW…LATF), 141–160 (LVYI…IPAL), 164–186 (VAPF…DYPF), and 212–232 (ALVS…PVAV).

The protein belongs to the CysZ family.

The protein localises to the cell inner membrane. Functionally, high affinity, high specificity proton-dependent sulfate transporter, which mediates sulfate uptake. Provides the sulfur source for the cysteine synthesis pathway. In Vibrio atlanticus (strain LGP32) (Vibrio splendidus (strain Mel32)), this protein is Sulfate transporter CysZ.